We begin with the raw amino-acid sequence, 135 residues long: Small ribosomal subunit protein uS12 (135 aa).

Residues 1–24 (MPTINQLVRKGRHSKTTKSKSPAL) form a disordered region. A compositionally biased stretch (basic residues) spans 9 to 18 (RKGRHSKTTK). D102 is modified (3-methylthioaspartic acid).

This sequence belongs to the universal ribosomal protein uS12 family. In terms of assembly, part of the 30S ribosomal subunit. Contacts proteins S8 and S17. May interact with IF1 in the 30S initiation complex.

Its function is as follows. With S4 and S5 plays an important role in translational accuracy. Functionally, interacts with and stabilizes bases of the 16S rRNA that are involved in tRNA selection in the A site and with the mRNA backbone. Located at the interface of the 30S and 50S subunits, it traverses the body of the 30S subunit contacting proteins on the other side and probably holding the rRNA structure together. The combined cluster of proteins S8, S12 and S17 appears to hold together the shoulder and platform of the 30S subunit. The chain is Small ribosomal subunit protein uS12 from Lactobacillus delbrueckii subsp. bulgaricus (strain ATCC 11842 / DSM 20081 / BCRC 10696 / JCM 1002 / NBRC 13953 / NCIMB 11778 / NCTC 12712 / WDCM 00102 / Lb 14).